We begin with the raw amino-acid sequence, 128 residues long: MKLFIGLIFCSLVMGVSSDGWFSFFKEAVQGASDLWRAYWDMKEANYQNSGRYFRARGNYEAAQRGPGGIWAAKIISNVGEYFQGLLQYLGSSSEREEDQVSNRRAEEWGRSGQDPDHFRPAGLPKKY.

The N-terminal stretch at 1-18 (MKLFIGLIFCSLVMGVSS) is a signal peptide. The segment at 93–128 (SSEREEDQVSNRRAEEWGRSGQDPDHFRPAGLPKKY) is disordered. The segment covering 99-120 (DQVSNRRAEEWGRSGQDPDHFR) has biased composition (basic and acidic residues).

This sequence belongs to the SAA family. As to quaternary structure, apolipoprotein of the HDL complex.

The protein localises to the secreted. Functionally, major acute phase reactant. The sequence is that of Serum amyloid A-4 protein from Sus scrofa (Pig).